Consider the following 231-residue polypeptide: Orotidine 5'-phosphate decarboxylase (231 aa).

Residues aspartate 11, lysine 33, 60–69 (DLKFHDIPNT), threonine 120, arginine 181, glutamine 190, glycine 210, and arginine 211 each bind substrate. Residue lysine 62 is the Proton donor of the active site.

The protein belongs to the OMP decarboxylase family. Type 1 subfamily. Homodimer.

It carries out the reaction orotidine 5'-phosphate + H(+) = UMP + CO2. The protein operates within pyrimidine metabolism; UMP biosynthesis via de novo pathway; UMP from orotate: step 2/2. Functionally, catalyzes the decarboxylation of orotidine 5'-monophosphate (OMP) to uridine 5'-monophosphate (UMP). In Pseudoalteromonas atlantica (strain T6c / ATCC BAA-1087), this protein is Orotidine 5'-phosphate decarboxylase.